A 308-amino-acid chain; its full sequence is Protein translocase subunit SecF (308 aa).

Helical transmembrane passes span 22 to 42, 140 to 160, 164 to 184, 194 to 214, 246 to 266, and 272 to 292; these read AVSYSFSIILSLISFIWIGIY, IEAGAMAMLSSFLAIMVYIWV, WYFGLGILIALVHDVILALGF, LSTIAAVLTIIGYSVNDSVVI, ILTVITTLLANLALMLFGGEA, and VLVFFGIIAGTYSSIFISAPI.

It belongs to the SecD/SecF family. SecF subfamily. In terms of assembly, forms a complex with SecD. Part of the essential Sec protein translocation apparatus which comprises SecA, SecYEG and auxiliary proteins SecDF-YajC and YidC.

The protein localises to the cell inner membrane. Functionally, part of the Sec protein translocase complex. Interacts with the SecYEG preprotein conducting channel. SecDF uses the proton motive force (PMF) to complete protein translocation after the ATP-dependent function of SecA. This chain is Protein translocase subunit SecF, found in Rickettsia akari (strain Hartford).